The primary structure comprises 865 residues: Alanine--tRNA ligase (865 aa).

Zn(2+) contacts are provided by H554, H558, C656, and H660.

The protein belongs to the class-II aminoacyl-tRNA synthetase family. Zn(2+) serves as cofactor.

The protein resides in the cytoplasm. The catalysed reaction is tRNA(Ala) + L-alanine + ATP = L-alanyl-tRNA(Ala) + AMP + diphosphate. Functionally, catalyzes the attachment of alanine to tRNA(Ala) in a two-step reaction: alanine is first activated by ATP to form Ala-AMP and then transferred to the acceptor end of tRNA(Ala). Also edits incorrectly charged Ser-tRNA(Ala) and Gly-tRNA(Ala) via its editing domain. The protein is Alanine--tRNA ligase of Francisella tularensis subsp. tularensis (strain WY96-3418).